The following is a 61-amino-acid chain: Large ribosomal subunit protein uL30 (61 aa).

Belongs to the universal ribosomal protein uL30 family. In terms of assembly, part of the 50S ribosomal subunit.

This chain is Large ribosomal subunit protein uL30, found in Laribacter hongkongensis (strain HLHK9).